The following is a 112-amino-acid chain: UPF0342 protein SGO_1370 (112 aa).

This sequence belongs to the UPF0342 family.

The chain is UPF0342 protein SGO_1370 from Streptococcus gordonii (strain Challis / ATCC 35105 / BCRC 15272 / CH1 / DL1 / V288).